The sequence spans 182 residues: NADH-quinone oxidoreductase subunit I (182 aa).

4Fe-4S ferredoxin-type domains follow at residues 52–82 (LTRD…LQKA) and 92–121 (DFFR…LTPD). Cys-62, Cys-65, Cys-68, Cys-72, Cys-101, Cys-104, Cys-107, and Cys-111 together coordinate [4Fe-4S] cluster.

It belongs to the complex I 23 kDa subunit family. NDH-1 is composed of 13 different subunits. Subunits NuoA, H, J, K, L, M, N constitute the membrane sector of the complex. The cofactor is [4Fe-4S] cluster.

It is found in the cell inner membrane. It carries out the reaction a quinone + NADH + 5 H(+)(in) = a quinol + NAD(+) + 4 H(+)(out). Its function is as follows. NDH-1 shuttles electrons from NADH, via FMN and iron-sulfur (Fe-S) centers, to quinones in the respiratory chain. The immediate electron acceptor for the enzyme in this species is believed to be ubiquinone. Couples the redox reaction to proton translocation (for every two electrons transferred, four hydrogen ions are translocated across the cytoplasmic membrane), and thus conserves the redox energy in a proton gradient. This chain is NADH-quinone oxidoreductase subunit I, found in Pseudomonas fluorescens (strain Pf0-1).